The sequence spans 575 residues: Muellerian-inhibiting factor (575 aa).

The signal sequence occupies residues 1–24 (MPGPSLSLALVLSAMGALLRPGTP). The propeptide occupies 25 to 466 (REEVFSTSAL…ERSGSARAQR (442 aa)). N-linked (GlcNAc...) asparagine glycosylation is found at asparagine 78 and asparagine 344. Disulfide bonds link cysteine 477–cysteine 541, cysteine 503–cysteine 572, and cysteine 507–cysteine 574.

This sequence belongs to the TGF-beta family. In terms of assembly, homodimer; disulfide-linked. Preproprotein is proteolytically processed to generate N- and C-terminal cleavage products that homodimerize and associate to form a biologically active non-covalent complex. Binding of the non-covalent complex to AMHR2 induces dissociation of the pro-region from the mature C-terminal dimer. The N-terminal portion of the protein, despite having no intrinsic activity, has the role of amplifying the activity of the C-terminus. As to expression, expressed in fetal testis and adult ovaries.

The protein resides in the secreted. Functionally, plays an important role in several reproductive functions. Induces Muellerian duct regression during male fetal sexual differentiation and plays a role in Leydig cell differentiation and function. In female acts as a negative regulator of the primordial to primary follicle transition and decreases FSH sensitivity of growing follicles. AMH signals by binding to a specific type-II receptor, AMHR2, that heterodimerizes with type-I receptors (ACVR1 and BMPR1A), and recruiting SMAD proteins that are translocated to the nucleus to regulate target gene expression. This chain is Muellerian-inhibiting factor (AMH), found in Bos taurus (Bovine).